Consider the following 327-residue polypeptide: Pyruvate dehydrogenase E1 component subunit beta (327 aa).

Position 60 (Glu60) interacts with thiamine diphosphate. K(+)-binding residues include Ile113, Ala161, Ile162, and Asn166.

As to quaternary structure, heterodimer of an alpha and a beta chain. Thiamine diphosphate is required as a cofactor.

The protein resides in the plastid. It localises to the chloroplast. The enzyme catalyses N(6)-[(R)-lipoyl]-L-lysyl-[protein] + pyruvate + H(+) = N(6)-[(R)-S(8)-acetyldihydrolipoyl]-L-lysyl-[protein] + CO2. Functionally, the pyruvate dehydrogenase complex catalyzes the overall conversion of pyruvate to acetyl-CoA and CO(2). It contains multiple copies of three enzymatic components: pyruvate dehydrogenase (E1), dihydrolipoamide acetyltransferase (E2) and lipoamide dehydrogenase (E3). The polypeptide is Pyruvate dehydrogenase E1 component subunit beta (pdhB) (Mesostigma viride (Green alga)).